The chain runs to 218 residues: Large ribosomal subunit protein uL3 (218 aa).

It belongs to the universal ribosomal protein uL3 family. In terms of assembly, part of the 50S ribosomal subunit. Forms a cluster with proteins L14 and L19.

Its function is as follows. One of the primary rRNA binding proteins, it binds directly near the 3'-end of the 23S rRNA, where it nucleates assembly of the 50S subunit. The protein is Large ribosomal subunit protein uL3 of Rhodococcus jostii (strain RHA1).